We begin with the raw amino-acid sequence, 525 residues long: GMP synthase [glutamine-hydrolyzing] (525 aa).

One can recognise a Glutamine amidotransferase type-1 domain in the interval 11 to 200 (PVLVVDFGAQ…LTEIAGLEQN (190 aa)). Residue Cys88 is the Nucleophile of the active site. Active-site residues include His174 and Glu176. In terms of domain architecture, GMPS ATP-PPase spans 201-399 (WTAANIAEEL…LGLPEEIVNR (199 aa)). 229–235 (SGGVDSA) contributes to the ATP binding site.

In terms of assembly, homodimer.

The enzyme catalyses XMP + L-glutamine + ATP + H2O = GMP + L-glutamate + AMP + diphosphate + 2 H(+). It functions in the pathway purine metabolism; GMP biosynthesis; GMP from XMP (L-Gln route): step 1/1. In terms of biological role, catalyzes the synthesis of GMP from XMP. The polypeptide is GMP synthase [glutamine-hydrolyzing] (Corynebacterium diphtheriae (strain ATCC 700971 / NCTC 13129 / Biotype gravis)).